We begin with the raw amino-acid sequence, 364 residues long: Valine dehydrogenase (364 aa).

Lys91 is a catalytic residue. Residue Gly191–His197 participates in NAD(+) binding.

The protein belongs to the Glu/Leu/Phe/Val dehydrogenases family. Homodimer.

The protein resides in the cytoplasm. The enzyme catalyses L-valine + NAD(+) + H2O = 3-methyl-2-oxobutanoate + NH4(+) + NADH + H(+). The protein operates within amino-acid degradation; L-valine degradation. Its activity is regulated as follows. Repressed in minimal medium by the presence of glucose and NH4(+), glycerol and NH4(+), or glycerol and asparagine. In terms of biological role, oxidative deamination of branched-chain amino acids. Oxidizes L-valine and L-alpha-aminobutyric acid efficiently, and L-isoleucine and L-leucine less efficiently. Does not act on D-valine. The catabolism of L-valine is the major source of fatty acid precursors for macrolide biosynthesis and a vital source of antibiotic precursors. Uses NAD; no activity was found with NADP. The protein is Valine dehydrogenase (vdh) of Streptomyces coelicolor (strain ATCC BAA-471 / A3(2) / M145).